The sequence spans 204 residues: Large ribosomal subunit protein uL13 (204 aa).

The protein belongs to the universal ribosomal protein uL13 family.

The protein is Large ribosomal subunit protein uL13 (RpL13A) of Choristoneura parallela (Spotted fireworm moth).